The chain runs to 242 residues: Host range factor p28 (242 aa).

The KilA-N domain maps to 21–131 (YIDEPNDIRL…QSILRGLVNW (111 aa)). Residues 173 to 226 (CGICYEVVYSKRLENDRYFGLLDSCNHIFCITCINIWHRTRRETGASDNCPICR) form an RING-type zinc finger.

This sequence belongs to the orthopoxvirus OPG021 family.

Its subcellular location is the host cytoplasm. It carries out the reaction S-ubiquitinyl-[E2 ubiquitin-conjugating enzyme]-L-cysteine + [acceptor protein]-L-lysine = [E2 ubiquitin-conjugating enzyme]-L-cysteine + N(6)-ubiquitinyl-[acceptor protein]-L-lysine.. In terms of biological role, RING-finger E3 ubiquitin ligase which catalyzes the formation of both 'Lys-48'- and 'Lys-63'-linked polyubiquitin chains. Plays an important role in virulence by acting as an anti-apoptotic factor. This chain is Host range factor p28 (OPG021), found in Bos taurus (Bovine).